A 122-amino-acid chain; its full sequence is Histone H2B 1 (122 aa).

The interval 1–30 (MPPKPSAKGAKKAAKTVTKPKDGKKRRHAR) is disordered. O-linked (GlcNAc) serine glycosylation is present at Ser109. Lys117 is covalently cross-linked (Glycyl lysine isopeptide (Lys-Gly) (interchain with G-Cter in ubiquitin)).

Belongs to the histone H2B family. As to quaternary structure, the nucleosome is a histone octamer containing two molecules each of H2A, H2B, H3 and H4 assembled in one H3-H4 heterotetramer and two H2A-H2B heterodimers. The octamer wraps approximately 147 bp of DNA. Post-translationally, monoubiquitination of Lys-117 gives a specific tag for epigenetic transcriptional activation and is also prerequisite for histone H3 'Lys-4' and 'Lys-79' methylation. In terms of processing, glcNAcylation at Ser-109 promotes monoubiquitination of Lys-117. It fluctuates in response to extracellular glucose, and associates with transcribed genes.

The protein resides in the nucleus. It localises to the chromosome. Functionally, core component of nucleosome. Nucleosomes wrap and compact DNA into chromatin, limiting DNA accessibility to the cellular machineries which require DNA as a template. Histones thereby play a central role in transcription regulation, DNA repair, DNA replication and chromosomal stability. DNA accessibility is regulated via a complex set of post-translational modifications of histones, also called histone code, and nucleosome remodeling. The sequence is that of Histone H2B 1 (his-11) from Caenorhabditis elegans.